Here is a 238-residue protein sequence, read N- to C-terminus: Small ribosomal subunit protein eS4 (238 aa).

Positions 38-100 (LPLAIVIRDV…TGEVYRVVPD (63 aa)) constitute an S4 RNA-binding domain.

Belongs to the eukaryotic ribosomal protein eS4 family.

The chain is Small ribosomal subunit protein eS4 from Pyrobaculum arsenaticum (strain DSM 13514 / JCM 11321 / PZ6).